A 184-amino-acid chain; its full sequence is ATP synthase subunit b, chloroplastic (184 aa).

A helical transmembrane segment spans residues 27 to 49 (LATNPINLSVVLGVLIFFGKGVL).

It belongs to the ATPase B chain family. As to quaternary structure, F-type ATPases have 2 components, F(1) - the catalytic core - and F(0) - the membrane proton channel. F(1) has five subunits: alpha(3), beta(3), gamma(1), delta(1), epsilon(1). F(0) has four main subunits: a(1), b(1), b'(1) and c(10-14). The alpha and beta chains form an alternating ring which encloses part of the gamma chain. F(1) is attached to F(0) by a central stalk formed by the gamma and epsilon chains, while a peripheral stalk is formed by the delta, b and b' chains.

It is found in the plastid. Its subcellular location is the chloroplast thylakoid membrane. In terms of biological role, f(1)F(0) ATP synthase produces ATP from ADP in the presence of a proton or sodium gradient. F-type ATPases consist of two structural domains, F(1) containing the extramembraneous catalytic core and F(0) containing the membrane proton channel, linked together by a central stalk and a peripheral stalk. During catalysis, ATP synthesis in the catalytic domain of F(1) is coupled via a rotary mechanism of the central stalk subunits to proton translocation. Functionally, component of the F(0) channel, it forms part of the peripheral stalk, linking F(1) to F(0). The chain is ATP synthase subunit b, chloroplastic from Ceratophyllum demersum (Rigid hornwort).